Consider the following 348-residue polypeptide: Propane 2-monooxygenase, reductase component (348 aa).

Positions 5–95 constitute a 2Fe-2S ferredoxin-type domain; that stretch reads HKINFEPVDI…DCTIELLNFD (91 aa). Positions 39, 44, 47, and 79 each coordinate [2Fe-2S] cluster. Residues 105–206 form the FAD-binding FR-type domain; it reads IQDVRTEVLA…TGPYGSFTLK (102 aa).

This sequence belongs to the bacterial ring-hydroxylating dioxygenase ferredoxin reductase family. The propane 2-monooxygenase multicomponent enzyme system is composed of an electron transfer component and a monooxygenase component interacting with the effector protein MimD. The electron transfer component is composed of a reductase (MimB), and the monooxygenase component is formed by a large subunit (MimA) and a small subunit (MimC). The cofactor is FAD. It depends on [2Fe-2S] cluster as a cofactor.

In terms of biological role, reductase component of the propane 2-monooxygenase multicomponent enzyme system which is involved in the degradation of propane via the O2-dependent hydroxylation of propane. Reductase catalyzes the transfer of electrons from NADH or NADPH to monooxygenase. This Mycolicibacterium goodii (Mycobacterium goodii) protein is Propane 2-monooxygenase, reductase component.